A 163-amino-acid polypeptide reads, in one-letter code: Small ribosomal subunit protein uS9 (163 aa).

Positions methionine 1–threonine 41 are disordered. Residues threonine 18 to glycine 38 are compositionally biased toward low complexity.

The protein belongs to the universal ribosomal protein uS9 family.

The protein is Small ribosomal subunit protein uS9 of Bifidobacterium adolescentis (strain ATCC 15703 / DSM 20083 / NCTC 11814 / E194a).